A 361-amino-acid polypeptide reads, in one-letter code: 5-formaminoimidazole-4-carboxamide-1-(beta)-D-ribofuranosyl 5'-monophosphate synthetase (361 aa).

5-amino-1-(5-phospho-beta-D-ribosyl)imidazole-4-carboxamide is bound by residues His27 and Ser94. Residues 116 to 348 (RRILRWESER…MGQRIAREIK (233 aa)) form the ATP-grasp domain. Residues 156-166 (KFPGARGGRGY), 199-202 (EEYV), and Glu230 contribute to the ATP site. Residue Asn258 participates in 5-amino-1-(5-phospho-beta-D-ribosyl)imidazole-4-carboxamide binding. The Mg(2+) site is built by Gln297 and Glu310.

It belongs to the phosphohexose mutase family. In terms of assembly, homohexamer. Dimer of trimers. Mg(2+) serves as cofactor. The cofactor is Mn(2+).

It catalyses the reaction 5-amino-1-(5-phospho-beta-D-ribosyl)imidazole-4-carboxamide + formate + ATP = 5-formamido-1-(5-phospho-D-ribosyl)imidazole-4-carboxamide + ADP + phosphate. Its pathway is purine metabolism; IMP biosynthesis via de novo pathway; 5-formamido-1-(5-phospho-D-ribosyl)imidazole-4-carboxamide from 5-amino-1-(5-phospho-D-ribosyl)imidazole-4-carboxamide (formate route): step 1/1. Inhibited by ADP. Its function is as follows. Catalyzes the ATP- and formate-dependent formylation of 5-aminoimidazole-4-carboxamide-1-beta-d-ribofuranosyl 5'-monophosphate (AICAR) to 5-formaminoimidazole-4-carboxamide-1-beta-d-ribofuranosyl 5'-monophosphate (FAICAR) in the absence of folates. This is 5-formaminoimidazole-4-carboxamide-1-(beta)-D-ribofuranosyl 5'-monophosphate synthetase from Methanocaldococcus jannaschii (strain ATCC 43067 / DSM 2661 / JAL-1 / JCM 10045 / NBRC 100440) (Methanococcus jannaschii).